Reading from the N-terminus, the 196-residue chain is Imidazole glycerol phosphate synthase subunit HisH (196 aa).

The Glutamine amidotransferase type-1 domain occupies Asp2–Met196. The Nucleophile role is filled by Cys77. Catalysis depends on residues His178 and Glu180.

In terms of assembly, heterodimer of HisH and HisF.

It is found in the cytoplasm. The catalysed reaction is 5-[(5-phospho-1-deoxy-D-ribulos-1-ylimino)methylamino]-1-(5-phospho-beta-D-ribosyl)imidazole-4-carboxamide + L-glutamine = D-erythro-1-(imidazol-4-yl)glycerol 3-phosphate + 5-amino-1-(5-phospho-beta-D-ribosyl)imidazole-4-carboxamide + L-glutamate + H(+). It catalyses the reaction L-glutamine + H2O = L-glutamate + NH4(+). Its pathway is amino-acid biosynthesis; L-histidine biosynthesis; L-histidine from 5-phospho-alpha-D-ribose 1-diphosphate: step 5/9. Functionally, IGPS catalyzes the conversion of PRFAR and glutamine to IGP, AICAR and glutamate. The HisH subunit catalyzes the hydrolysis of glutamine to glutamate and ammonia as part of the synthesis of IGP and AICAR. The resulting ammonia molecule is channeled to the active site of HisF. The polypeptide is Imidazole glycerol phosphate synthase subunit HisH (Yersinia pestis).